The primary structure comprises 151 residues: Probable transcriptional regulator syrB3 (151 aa).

Residues 1-65 (MVDESNAGPV…QERSEKLRLI (65 aa)) form a disordered region. Over residues 7–23 (AGPVAPAVVADAEVKAP) the composition is skewed to low complexity. Over residues 52-65 (GYSEQERSEKLRLI) the composition is skewed to basic and acidic residues.

Belongs to the SyrB family.

This chain is Probable transcriptional regulator syrB3 (syrB3), found in Rhizobium meliloti (strain 1021) (Ensifer meliloti).